The primary structure comprises 546 residues: MTPGEVRRLYFIIRTFLSYGLDELIPRMRLTLPLRLWRYSLFWMPNRHKDKLLGERLRLALQELGPVWIKFGQMLSTRRDLFPPQIADQLALLQDKVAPFDGRLAKAQIEEAMGGLPVDAWFDDFDIQPLASASIAQVHTARLKSNGKEVVIKVIRPDILPVIQADLKLIYRLARWVPRLLPDGRRLRPTEVVREYEKTLIDELNLLRESANAIQLRRNFENSPMLYIPEVYSDYCSQNMMVMERIYGIPVSDVAALEKNGTNMKLLAERGVKVFFTQVFRDSFFHADMHPGNIFVSHEHPENPQYIGIDCGIVGSLNKEDKRYLAENFIAFFNRDYRKVAELHVDSGWVPPDTNVEDFEFAIRTVCEPIFEKPLAEISFGHVLLNLFNTARRFNMEVQPQLVLLQKTLLYVEGVGRQLYPQLDLWKTAKPFLESWIKDQVGIPALTRALKEKAPFWVEKMPEIPELVYDSLRQGKYLQHSVDKIARELQVNHVRQSQSRYLLGIGATLLLSGSFLLVNRPEWGLMPGWLMVGGVVVWLVGWRKTR.

The Protein kinase domain occupies 124 to 502 (DFDIQPLASA…HVRQSQSRYL (379 aa)). ATP is bound by residues 130 to 138 (LASASIAQV) and K153. The Proton acceptor role is filled by D288. A run of 2 helical transmembrane segments spans residues 501-521 (YLLG…VNRP) and 522-542 (EWGL…LVGW).

It belongs to the ABC1 family. UbiB subfamily.

The protein localises to the cell inner membrane. Its pathway is cofactor biosynthesis; ubiquinone biosynthesis [regulation]. In terms of biological role, is probably a protein kinase regulator of UbiI activity which is involved in aerobic coenzyme Q (ubiquinone) biosynthesis. The polypeptide is Probable protein kinase UbiB (Salmonella enteritidis PT4 (strain P125109)).